The sequence spans 169 residues: Monothiol glutaredoxin-S15, mitochondrial (169 aa).

The transit peptide at 1-37 directs the protein to the mitochondrion; the sequence is MAASLSSRLIKGIANLKAVRSSRLTSASVYQNGMMRF. The tract at residues 38-61 is disordered; sequence SSTVPSDSDTHDDFKPTQKVPPDS. The Glutaredoxin domain occupies 66–168; that stretch reads KDIVENDVKD…QKLKDVSGNQ (103 aa). Position 83 (lysine 83) interacts with glutathione. Cysteine 91 serves as a coordination point for [2Fe-2S] cluster. Glutathione is bound by residues lysine 120, phenylalanine 132, and 145-146; that span reads SD.

It belongs to the glutaredoxin family. CGFS subfamily. As to quaternary structure, [2Fe-2S]-bridged holo-homodimer. Interacts in vitro with SUFE1, BOLA1, BOLA2 and BOLA4. Interacts in vivo only with BOLA4.

The protein resides in the mitochondrion. May only reduce GSH-thiol disulfides, but not protein disulfides. Participates probably to the maturation of iron-sulfur proteins and to the regulation of the redox state of the BOLA proteins. The polypeptide is Monothiol glutaredoxin-S15, mitochondrial (Arabidopsis thaliana (Mouse-ear cress)).